Consider the following 205-residue polypeptide: IQ domain-containing protein F1 (205 aa).

2 stretches are compositionally biased toward basic and acidic residues: residues 1 to 24 (MEEKQPQKTKEPSKEDEPQQKEMP) and 51 to 68 (ANEKSEKPPENQKKLSDK). The tract at residues 1–68 (MEEKQPQKTK…PENQKKLSDK (68 aa)) is disordered. 2 consecutive IQ domains span residues 68–97 (KDTVATKIQAWWRGTLVRRALLHAALSACI) and 124–153 (KEWAAVTLQSQARMWRIRRRYCQVLNAVRI).

As to quaternary structure, interacts with calmodulin.

It is found in the cytoplasmic vesicle. The protein resides in the secretory vesicle. It localises to the acrosome. Functionally, involved in sperm capacitation and acrosome reaction. The protein is IQ domain-containing protein F1 of Homo sapiens (Human).